The sequence spans 197 residues: Putative RNA-binding protein EEED8.12 (197 aa).

The 78-residue stretch at 61-138 (KSVFIGNVDF…RPIVVTAKRT (78 aa)) folds into the RRM domain. Residues 142–166 (GMGHGVRGSSRGTFGRGRGAARGAP) form a disordered region.

This Caenorhabditis elegans protein is Putative RNA-binding protein EEED8.12.